A 112-amino-acid chain; its full sequence is Ferredoxin, plant-type (112 aa).

A 2Fe-2S ferredoxin-type domain is found at 6 to 97; it reads YEVFEVLSGQ…DLTIEYFRHV (92 aa). [2Fe-2S] cluster-binding residues include Cys-41, Cys-46, Cys-49, and Cys-81.

The protein belongs to the 2Fe2S plant-type ferredoxin family.

The protein operates within aromatic compound metabolism; catechol degradation. Its function is as follows. Ferredoxins are iron-sulfur proteins that transfer electrons in a wide variety of metabolic reactions. This is Ferredoxin, plant-type (xylT) from Pseudomonas putida (Arthrobacter siderocapsulatus).